A 209-amino-acid polypeptide reads, in one-letter code: Large ribosomal subunit protein uL3 (209 aa).

Residues 133–153 form a disordered region; that stretch reads THGNSLSHRVPGSIGQNQTPG. An N5-methylglutamine modification is found at Gln-150.

It belongs to the universal ribosomal protein uL3 family. Part of the 50S ribosomal subunit. Forms a cluster with proteins L14 and L19. In terms of processing, methylated by PrmB.

One of the primary rRNA binding proteins, it binds directly near the 3'-end of the 23S rRNA, where it nucleates assembly of the 50S subunit. In Pectobacterium carotovorum subsp. carotovorum (strain PC1), this protein is Large ribosomal subunit protein uL3.